The sequence spans 901 residues: HTH-type transcriptional regulator MalT (901 aa).

39-46 contacts ATP; that stretch reads SPAGYGKT. One can recognise an HTH luxR-type domain in the interval 829-894; the sequence is ELIRTSPLTQ…DAVQHAQQLL (66 aa). The segment at residues 853 to 872 is a DNA-binding region (H-T-H motif); the sequence is NEQIAGELAVAATTIKTHIR.

The protein belongs to the MalT family. As to quaternary structure, monomer in solution. Oligomerizes to an active state in the presence of the positive effectors ATP and maltotriose.

With respect to regulation, activated by ATP and maltotriose, which are both required for DNA binding. Positively regulates the transcription of the maltose regulon whose gene products are responsible for uptake and catabolism of malto-oligosaccharides. Specifically binds to the promoter region of its target genes, recognizing a short DNA motif called the MalT box. The protein is HTH-type transcriptional regulator MalT of Salmonella heidelberg (strain SL476).